A 67-amino-acid polypeptide reads, in one-letter code: Protein LITTLE ZIPPER 3 (67 aa).

A coiled-coil region spans residues 14–59 (YIMKENERLRKKAELLNQENQQLLFQLKQKLSKTKNSNNGSNNDNK). A disordered region spans residues 42–67 (QKLSKTKNSNNGSNNDNKSSSASGQS).

In terms of assembly, interacts with REV. Interacts with ATBH-8, ATBH-9, ATB-14 and ATB-15. As to expression, expressed in the adaxial epidermis of the cotyledons and leaves, and in the vascular cylinder of wild-type torpedo stage embryos. Confined in the central zone and the organizing center in the shoot apical meristem.

The protein localises to the nucleus. Functionally, competitive inhibitor of the HD-ZIPIII transcription factors in shoot apical meristem (SAM) development. Acts by forming non-functional heterodimers. Part of a negative feedback loop. Involved in SAM development and lateral organ patterning. Essential for proper functioning of stem cells in the SAM. In Arabidopsis thaliana (Mouse-ear cress), this protein is Protein LITTLE ZIPPER 3.